The sequence spans 238 residues: tRNA (guanine-N(7)-)-methyltransferase (238 aa).

Residues E68, E93, D120, and D143 each contribute to the S-adenosyl-L-methionine site. D143 is an active-site residue. Residues K147, D179, and 216-219 contribute to the substrate site; that span reads TKFE.

It belongs to the class I-like SAM-binding methyltransferase superfamily. TrmB family.

The catalysed reaction is guanosine(46) in tRNA + S-adenosyl-L-methionine = N(7)-methylguanosine(46) in tRNA + S-adenosyl-L-homocysteine. It functions in the pathway tRNA modification; N(7)-methylguanine-tRNA biosynthesis. Its function is as follows. Catalyzes the formation of N(7)-methylguanine at position 46 (m7G46) in tRNA. The sequence is that of tRNA (guanine-N(7)-)-methyltransferase from Aliivibrio salmonicida (strain LFI1238) (Vibrio salmonicida (strain LFI1238)).